Consider the following 101-residue polypeptide: Small ribosomal subunit protein uS14 (101 aa).

Belongs to the universal ribosomal protein uS14 family. As to quaternary structure, part of the 30S ribosomal subunit. Contacts proteins S3 and S10.

Its function is as follows. Binds 16S rRNA, required for the assembly of 30S particles and may also be responsible for determining the conformation of the 16S rRNA at the A site. This is Small ribosomal subunit protein uS14 from Shewanella denitrificans (strain OS217 / ATCC BAA-1090 / DSM 15013).